The chain runs to 117 residues: Large ribosomal subunit protein uL22 (117 aa).

The protein belongs to the universal ribosomal protein uL22 family. Part of the 50S ribosomal subunit.

In terms of biological role, this protein binds specifically to 23S rRNA; its binding is stimulated by other ribosomal proteins, e.g. L4, L17, and L20. It is important during the early stages of 50S assembly. It makes multiple contacts with different domains of the 23S rRNA in the assembled 50S subunit and ribosome. Functionally, the globular domain of the protein is located near the polypeptide exit tunnel on the outside of the subunit, while an extended beta-hairpin is found that lines the wall of the exit tunnel in the center of the 70S ribosome. This Lactobacillus gasseri (strain ATCC 33323 / DSM 20243 / BCRC 14619 / CIP 102991 / JCM 1131 / KCTC 3163 / NCIMB 11718 / NCTC 13722 / AM63) protein is Large ribosomal subunit protein uL22.